We begin with the raw amino-acid sequence, 845 residues long: Translation initiation factor IF-2 (845 aa).

Residues 1–260 (MSDEQDKPTL…HMTSSGPREK (260 aa)) form a disordered region. Over residues 68–81 (APAPAPAAPRPAAP) the composition is skewed to pro residues. The segment covering 101 to 140 (REAEEARMAALEENRRREEAERARAAEEERARAEKREEQA) has biased composition (basic and acidic residues). Low complexity-rich tracts occupy residues 141-166 (ATKA…APPA) and 173-191 (TAAR…RFTP). The span at 194–215 (ALKRPEPKRPEPKASRGGENRR) shows a compositional bias: basic and acidic residues. The 171-residue stretch at 344–514 (PRAPVVTIMG…ALQAEIMELK (171 aa)) folds into the tr-type G domain. Residues 353-360 (GHVDHGKT) form a G1 region. Residue 353 to 360 (GHVDHGKT) coordinates GTP. The segment at 378 to 382 (GITQH) is G2. The tract at residues 400 to 403 (DTPG) is G3. GTP-binding positions include 400 to 404 (DTPGH) and 454 to 457 (NKVD). Positions 454-457 (NKVD) are G4. The G5 stretch occupies residues 490 to 492 (SAL).

This sequence belongs to the TRAFAC class translation factor GTPase superfamily. Classic translation factor GTPase family. IF-2 subfamily.

Its subcellular location is the cytoplasm. Functionally, one of the essential components for the initiation of protein synthesis. Protects formylmethionyl-tRNA from spontaneous hydrolysis and promotes its binding to the 30S ribosomal subunits. Also involved in the hydrolysis of GTP during the formation of the 70S ribosomal complex. In Sphingopyxis alaskensis (strain DSM 13593 / LMG 18877 / RB2256) (Sphingomonas alaskensis), this protein is Translation initiation factor IF-2.